The sequence spans 393 residues: MKAELIAVGTEILTGQIINTNAQFLSEKCAELGIDVYFHTAVGDNEGRLLSTLEVASKRSNMVVLCGGLGPTEDDLTKQTLATFLGRNLVFDELAMAKLDRFFASRPGRVRTPNNERQAQIVEGSQALQNPAGLAVGGMIEQDGVTYIVLPGPPSELKAMFSESLLPLLSQSQQQLYSRVLRFFGIGESQLVTVLADVIDKQTDPTLAPYAKVGEVTLRLSTKATSQEEANLRLNQLEEDILQHDKLADYFYAYGEDNSLVKTVATRLAEKRQTIAIVEQGTGGLLQAELSLALADQPYFSGGKVVGQLGIESGWLSEEADCIRQELQADLGLAVSVLIKPESTEDNVLAKVYLTLATPSGISQKEIDLRGYSWQYLRQLACLQAWDFVRNTL.

This sequence belongs to the CinA family.

The protein is Putative competence-damage inducible protein of Streptococcus suis (strain 05ZYH33).